A 459-amino-acid chain; its full sequence is Argininosuccinate lyase (459 aa).

Belongs to the lyase 1 family. Argininosuccinate lyase subfamily.

It localises to the cytoplasm. The enzyme catalyses 2-(N(omega)-L-arginino)succinate = fumarate + L-arginine. Its pathway is amino-acid biosynthesis; L-arginine biosynthesis; L-arginine from L-ornithine and carbamoyl phosphate: step 3/3. This Chromobacterium violaceum (strain ATCC 12472 / DSM 30191 / JCM 1249 / CCUG 213 / NBRC 12614 / NCIMB 9131 / NCTC 9757 / MK) protein is Argininosuccinate lyase.